The primary structure comprises 161 residues: ATP synthase subunit b 1 (161 aa).

Residues 6 to 26 (ETWVAIAFVILMVVFGYLGVF) traverse the membrane as a helical segment.

Belongs to the ATPase B chain family. F-type ATPases have 2 components, F(1) - the catalytic core - and F(0) - the membrane proton channel. F(1) has five subunits: alpha(3), beta(3), gamma(1), delta(1), epsilon(1). F(0) has three main subunits: a(1), b(2) and c(10-14). The alpha and beta chains form an alternating ring which encloses part of the gamma chain. F(1) is attached to F(0) by a central stalk formed by the gamma and epsilon chains, while a peripheral stalk is formed by the delta and b chains.

The protein localises to the cell inner membrane. F(1)F(0) ATP synthase produces ATP from ADP in the presence of a proton or sodium gradient. F-type ATPases consist of two structural domains, F(1) containing the extramembraneous catalytic core and F(0) containing the membrane proton channel, linked together by a central stalk and a peripheral stalk. During catalysis, ATP synthesis in the catalytic domain of F(1) is coupled via a rotary mechanism of the central stalk subunits to proton translocation. Its function is as follows. Component of the F(0) channel, it forms part of the peripheral stalk, linking F(1) to F(0). The polypeptide is ATP synthase subunit b 1 (Bradyrhizobium diazoefficiens (strain JCM 10833 / BCRC 13528 / IAM 13628 / NBRC 14792 / USDA 110)).